The primary structure comprises 486 residues: Glycogen synthase (486 aa).

Residue K20 coordinates ADP-alpha-D-glucose.

Belongs to the glycosyltransferase 1 family. Bacterial/plant glycogen synthase subfamily.

The enzyme catalyses [(1-&gt;4)-alpha-D-glucosyl](n) + ADP-alpha-D-glucose = [(1-&gt;4)-alpha-D-glucosyl](n+1) + ADP + H(+). Its pathway is glycan biosynthesis; glycogen biosynthesis. Synthesizes alpha-1,4-glucan chains using ADP-glucose. This is Glycogen synthase from Aeromonas salmonicida (strain A449).